The primary structure comprises 339 residues: Scoulerine-9-O-methyltransferase 3 (339 aa).

Residue M161 participates in S-adenosyl-L-methionine binding. D164 contacts substrate. S-adenosyl-L-methionine contacts are provided by residues T165, G191, D214, 228–229, and K242; that span reads DV. 243 to 247 is a binding site for substrate; that stretch reads SILHE. Residue H246 is the Proton acceptor of the active site.

Belongs to the class I-like SAM-binding methyltransferase superfamily. Cation-independent O-methyltransferase family. COMT subfamily. Homodimer. Forms heterodimer with SOMT2. The heterodimer SOMT2-SOMT3 possesses 3-O-acetyl-4'-O-demethylpapaveroxine 4'-O-methyltransferase activity, where SOMT2 is the catalytic subunit. As to expression, highly expressed in capsules. Expressed is stems. Expressed at low levels in roots.

The enzyme catalyses (S)-scoulerine + S-adenosyl-L-methionine = (S)-tetrahydrocolumbamine + S-adenosyl-L-homocysteine + H(+). Its pathway is alkaloid biosynthesis. In terms of biological role, methyltransferase involved in the biosynthesis of the benzylisoquinoline alkaloid noscapine. Catalyzes the conversion of (S)-scoulerine to (S)-tetrahydrocolumbamine. The sequence is that of Scoulerine-9-O-methyltransferase 3 from Papaver somniferum (Opium poppy).